Here is a 90-residue protein sequence, read N- to C-terminus: Cell division protein CrgA (90 aa).

A disordered region spans residues 1–25 (MPKARVTKNETAPVSSNPSANRTPV). Over residues 9-22 (NETAPVSSNPSANR) the composition is skewed to polar residues. 2 consecutive transmembrane segments (helical) span residues 38–58 (VIMF…YLVG) and 67–87 (LGAW…LMTM).

Belongs to the CrgA family.

It is found in the cell membrane. Functionally, involved in cell division. The polypeptide is Cell division protein CrgA (Corynebacterium glutamicum (strain R)).